The sequence spans 334 residues: Phosphate acyltransferase (334 aa).

This sequence belongs to the PlsX family. As to quaternary structure, homodimer. Probably interacts with PlsY.

It localises to the cytoplasm. The catalysed reaction is a fatty acyl-[ACP] + phosphate = an acyl phosphate + holo-[ACP]. Its pathway is lipid metabolism; phospholipid metabolism. In terms of biological role, catalyzes the reversible formation of acyl-phosphate (acyl-PO(4)) from acyl-[acyl-carrier-protein] (acyl-ACP). This enzyme utilizes acyl-ACP as fatty acyl donor, but not acyl-CoA. In Caldicellulosiruptor saccharolyticus (strain ATCC 43494 / DSM 8903 / Tp8T 6331), this protein is Phosphate acyltransferase.